The primary structure comprises 427 residues: Histidine--tRNA ligase (427 aa).

It belongs to the class-II aminoacyl-tRNA synthetase family. In terms of assembly, homodimer.

It is found in the cytoplasm. The catalysed reaction is tRNA(His) + L-histidine + ATP = L-histidyl-tRNA(His) + AMP + diphosphate + H(+). The protein is Histidine--tRNA ligase of Chloroherpeton thalassium (strain ATCC 35110 / GB-78).